Consider the following 201-residue polypeptide: Prostamide/prostaglandin F synthase (201 aa).

This sequence belongs to the peroxiredoxin-like PRXL2 family. Prostamide/prostaglandin F synthase subfamily.

It is found in the cytoplasm. The protein resides in the cytosol. The catalysed reaction is prostaglandin H2 + [thioredoxin]-dithiol = prostaglandin F2alpha + [thioredoxin]-disulfide. It carries out the reaction prostamide F2alpha + [thioredoxin]-disulfide = prostamide H2 + [thioredoxin]-dithiol. In terms of biological role, catalyzes the reduction of prostaglandin-ethanolamide H(2) (prostamide H(2)) to prostamide F(2alpha) with NADPH as proton donor. Also able to reduce prostaglandin H(2) to prostaglandin F(2alpha). The protein is Prostamide/prostaglandin F synthase (prxl2b) of Xenopus laevis (African clawed frog).